The primary structure comprises 253 residues: Chloride intracellular channel protein 4 (253 aa).

N-acetylalanine is present on A2. The segment at 2–101 (ALSMPLNGLK…EEFLEEVLCP (100 aa)) is required for insertion into the membrane. S4 carries the phosphoserine modification. K24 is subject to N6-acetyllysine. Positions 35-38 (CPFS) match the G-site motif. The chain crosses the membrane as a helical span at residues 37-57 (FSQRLFMILWLKGVVFSVTTV). Residues 81-244 (NSEVKTDVNK…PSDKEVEIAY (164 aa)) form the GST C-terminal domain. N6-acetyllysine is present on K130. Phosphoserine is present on residues S132, S167, and S236. At Y244 the chain carries Phosphotyrosine.

The protein belongs to the chloride channel CLIC family. Monomer. Interacts with HRH3. As to expression, detected in brain, in cell bodies and dendrites of Purkinje cells in cerebellar neurons (at protein level). Expressed neonatal and adult cardiomyocytes (at protein level). Marked expression was found in hippocampus and cerebellum, and in many other tissues.

The protein resides in the cytoplasm. It localises to the cytoskeleton. Its subcellular location is the microtubule organizing center. It is found in the centrosome. The protein localises to the cytoplasmic vesicle membrane. The protein resides in the nucleus. It localises to the cell membrane. Its subcellular location is the mitochondrion. It is found in the cell junction. The protein localises to the endoplasmic reticulum membrane. The enzyme catalyses chloride(in) = chloride(out). The catalysed reaction is thiocyanate(in) = thiocyanate(out). It catalyses the reaction nitrate(in) = nitrate(out). It carries out the reaction iodide(out) = iodide(in). The enzyme catalyses bromide(in) = bromide(out). The catalysed reaction is fluoride(in) = fluoride(out). It catalyses the reaction choline(out) = choline(in). With respect to regulation, channel activity is redox- and pH-regulated. Anion vs cation selectivity is enhanced when fully oxidized. Its function is as follows. In the soluble state, catalyzes glutaredoxin-like thiol disulfide exchange reactions with reduced glutathione as electron donor. Can insert into membranes and form voltage-dependent multi-ion conductive channels. Membrane insertion seems to be redox-regulated and may occur only under oxidizing conditions. Has alternate cellular functions like a potential role in angiogenesis or in maintaining apical-basolateral membrane polarity during mitosis and cytokinesis. Could also promote endothelial cell proliferation and regulate endothelial morphogenesis (tubulogenesis). Promotes cell-surface expression of HRH3. The sequence is that of Chloride intracellular channel protein 4 (Clic4) from Rattus norvegicus (Rat).